A 52-amino-acid chain; its full sequence is Conotoxin Cal9.2c (52 aa).

Residues 1-6 (KKGVTL) constitute a propeptide that is removed on maturation. Cystine bridges form between Cys-14–Cys-31, Cys-19–Cys-41, and Cys-21–Cys-46.

As to expression, expressed by the venom duct.

It is found in the secreted. Functionally, probable neurotoxin with unknown target. Possibly targets ion channels. The chain is Conotoxin Cal9.2c from Californiconus californicus (California cone).